The following is a 420-amino-acid chain: Shaggy-related protein kinase delta (420 aa).

The disordered stretch occupies residues 1-61 (MESHLGNGVG…DIIDGVGAEP (61 aa)). Positions 10–26 (GSSRSAKNTKNTSSSVD) are enriched in polar residues. Residues 28 to 41 (LSRDMLEMKIRDKT) are compositionally biased toward basic and acidic residues. Residues 42–53 (EADEERDSEPDI) are compositionally biased toward acidic residues. One can recognise a Protein kinase domain in the interval 82-366 (YIAEHVVGTG…AVEACIHPFF (285 aa)). ATP is bound by residues 88–96 (VGTGSFGMV) and Lys-111. Asp-207 functions as the Proton acceptor in the catalytic mechanism. Tyr-242 carries the phosphotyrosine modification.

The protein belongs to the protein kinase superfamily. CMGC Ser/Thr protein kinase family. GSK-3 subfamily. Autophosphorylated mainly on threonine and serine residues.

It carries out the reaction L-seryl-[protein] + ATP = O-phospho-L-seryl-[protein] + ADP + H(+). The catalysed reaction is L-threonyl-[protein] + ATP = O-phospho-L-threonyl-[protein] + ADP + H(+). Functionally, may mediate extracellular signals to regulate transcription in differentiating cells. This chain is Shaggy-related protein kinase delta (ASK4), found in Arabidopsis thaliana (Mouse-ear cress).